We begin with the raw amino-acid sequence, 554 residues long: MSGYDGGYSGGGGRGGGGYGGGGYGRDRGGDRGGDRNGGGFGGRSNGNGYGGGGYGGGGGGYGGGGFGGGAGGDRMGALGSGLKNQEWDINSLPKFEKSFYKEHPDVETRSDADVEAFRRKHQMTIAGSNVPKPVETFDEAGFPRYVMDEVKAQGFPAPTAIQSQGWPMALSGRDVVGIAETGSGKTLTYCLPSIVHINAQPLLAPGDGPIVLVLAPTRELAVQIQEEMKKFGRSSRIRNTCVYGGVPKGPQIRDLSRGVEVCIATPGRLIDMLEAGKTNLRRVTYLVLDEADRMLDMGFEPQIRKIIGQIRPDRQTLMWSATWPKEVRALASDFLQDFIQVNIGSMELAANHRITQIVEVVTEMEKRDRMIKHMEKVMENKENKILIFVGTKRVADEITRFLRQDGWPALSIHGDKQQNERDWVLDQFKTGKSPIMVATDVASRGIDVRNITHVLNYDYPNNSEDYIHRIGRTGRAGAMGTAITLFTTDNQKQARDLVNVLQEAKQQIDPRLVEMTRYGGGGGRGYGGWGRGRGGGRANAHNANNMPIGNRRW.

Over residues 1 to 24 (MSGYDGGYSGGGGRGGGGYGGGGY) the composition is skewed to gly residues. The interval 1-47 (MSGYDGGYSGGGGRGGGGYGGGGYGRDRGGDRGGDRNGGGFGGRSNG) is disordered. Over residues 25 to 35 (GRDRGGDRGGD) the composition is skewed to basic and acidic residues. Positions 36-47 (RNGGGFGGRSNG) are enriched in gly residues. Positions 136-164 (ETFDEAGFPRYVMDEVKAQGFPAPTAIQS) match the Q motif motif. Residues 167–342 (WPMALSGRDV…SDFLQDFIQV (176 aa)) enclose the Helicase ATP-binding domain. Position 180–187 (180–187 (AETGSGKT)) interacts with ATP. The short motif at 290-293 (DEAD) is the DEAD box element. The region spanning 357–517 (QIVEVVTEME…QIDPRLVEMT (161 aa)) is the Helicase C-terminal domain. Residues 519–540 (YGGGGGRGYGGWGRGRGGGRAN) form an RNA-binding RGG-box region.

The protein belongs to the DEAD box helicase family. DDX5/DBP2 subfamily. Associates with polysomes.

It localises to the cytoplasm. Its subcellular location is the nucleus. It carries out the reaction ATP + H2O = ADP + phosphate + H(+). Its function is as follows. ATP-dependent RNA helicase involved nonsense-mediated mRNA decay and ribosome biogenesis through rRNA processing. This Gibberella zeae (strain ATCC MYA-4620 / CBS 123657 / FGSC 9075 / NRRL 31084 / PH-1) (Wheat head blight fungus) protein is ATP-dependent RNA helicase DBP2 (DBP2).